The chain runs to 386 residues: Chaperone protein DnaJ (386 aa).

Residues 5 to 70 (DYYEVLGVER…QKRAAYDRYG (66 aa)) form the J domain. The CR-type zinc-finger motif lies at 138-216 (GKDETIHVPQ…CGGHGQVKEE (79 aa)). Positions 151, 154, 168, 171, 190, 193, 204, and 207 each coordinate Zn(2+). CXXCXGXG motif repeat units follow at residues 151–158 (CRPCEGTG), 168–175 (CETCGGHG), 190–197 (CHICQGRG), and 204–211 (CKTCGGHG).

The protein belongs to the DnaJ family. As to quaternary structure, homodimer. Zn(2+) serves as cofactor.

It localises to the cytoplasm. In terms of biological role, participates actively in the response to hyperosmotic and heat shock by preventing the aggregation of stress-denatured proteins and by disaggregating proteins, also in an autonomous, DnaK-independent fashion. Unfolded proteins bind initially to DnaJ; upon interaction with the DnaJ-bound protein, DnaK hydrolyzes its bound ATP, resulting in the formation of a stable complex. GrpE releases ADP from DnaK; ATP binding to DnaK triggers the release of the substrate protein, thus completing the reaction cycle. Several rounds of ATP-dependent interactions between DnaJ, DnaK and GrpE are required for fully efficient folding. Also involved, together with DnaK and GrpE, in the DNA replication of plasmids through activation of initiation proteins. The protein is Chaperone protein DnaJ of Hyphomonas neptunium (strain ATCC 15444).